We begin with the raw amino-acid sequence, 652 residues long: Leucine aminopeptidase 2 (652 aa).

A peptide-binding positions include 165-167 (QLE) and 293-298 (PYGGME). His-322 is a Zn(2+) binding site. The active-site Proton acceptor is the Glu-323. His-326 and Glu-345 together coordinate Zn(2+). The active-site Proton donor is Tyr-411.

The protein belongs to the peptidase M1 family. Zn(2+) is required as a cofactor.

The protein localises to the cytoplasm. It localises to the nucleus. It carries out the reaction an epoxide + H2O = an ethanediol. In terms of biological role, aminopeptidase that preferentially cleaves di- and tripeptides. Also has low epoxide hydrolase activity (in vitro). Can hydrolyze the epoxide leukotriene LTA(4) but it forms preferentially 5,6-dihydroxy-7,9,11,14-eicosatetraenoic acid rather than the cytokine leukotriene B(4) as the product compared to the homologous mammalian enzyme (in vitro). In Candida glabrata (strain ATCC 2001 / BCRC 20586 / JCM 3761 / NBRC 0622 / NRRL Y-65 / CBS 138) (Yeast), this protein is Leucine aminopeptidase 2.